Here is a 165-residue protein sequence, read N- to C-terminus: Thiol peroxidase (165 aa).

One can recognise a Thioredoxin domain in the interval 18-164 (RKVGDKAPNF…YEAAIEAAKK (147 aa)). C60 acts as the Cysteine sulfenic acid (-SOH) intermediate in catalysis. Residues C60 and C94 are joined by a disulfide bond.

Belongs to the peroxiredoxin family. Tpx subfamily. Homodimer.

The enzyme catalyses a hydroperoxide + [thioredoxin]-dithiol = an alcohol + [thioredoxin]-disulfide + H2O. Functionally, thiol-specific peroxidase that catalyzes the reduction of hydrogen peroxide and organic hydroperoxides to water and alcohols, respectively. Plays a role in cell protection against oxidative stress by detoxifying peroxides. The sequence is that of Thiol peroxidase from Listeria innocua serovar 6a (strain ATCC BAA-680 / CLIP 11262).